Reading from the N-terminus, the 495-residue chain is Chromosomal replication initiator protein DnaA (495 aa).

Residues 1 to 91 (MTADPDPPFV…ITALSRHLGQ (91 aa)) are domain I, interacts with DnaA modulators. The tract at residues 91 to 154 (QRVELGVRIA…TPAAEDPNAV (64 aa)) is domain II. Residues 155–371 (SLNRRYTFDT…GALIRVTAFA (217 aa)) form a domain III, AAA+ region region. G199, G201, K202, and T203 together coordinate ATP. A domain IV, binds dsDNA region spans residues 372-495 (SLNKTPIDKS…TTRIRQRAKR (124 aa)).

This sequence belongs to the DnaA family. As to quaternary structure, oligomerizes as a right-handed, spiral filament on DNA at oriC.

It localises to the cytoplasm. Functionally, plays an essential role in the initiation and regulation of chromosomal replication. ATP-DnaA binds to the origin of replication (oriC) to initiate formation of the DNA replication initiation complex once per cell cycle. Binds the DnaA box (a 9 base pair repeat at the origin) and separates the double-stranded (ds)DNA. Forms a right-handed helical filament on oriC DNA; dsDNA binds to the exterior of the filament while single-stranded (ss)DNA is stabiized in the filament's interior. The ATP-DnaA-oriC complex binds and stabilizes one strand of the AT-rich DNA unwinding element (DUE), permitting loading of DNA polymerase. After initiation quickly degrades to an ADP-DnaA complex that is not apt for DNA replication. Binds acidic phospholipids. This Mycobacterium sp. (strain JLS) protein is Chromosomal replication initiator protein DnaA.